A 295-amino-acid polypeptide reads, in one-letter code: Ethanolamine ammonia-lyase small subunit (295 aa).

Positions 207, 228, and 258 each coordinate adenosylcob(III)alamin.

The protein belongs to the EutC family. The basic unit is a heterodimer which dimerizes to form tetramers. The heterotetramers trimerize; 6 large subunits form a core ring with 6 small subunits projecting outwards. It depends on adenosylcob(III)alamin as a cofactor.

It is found in the bacterial microcompartment. It carries out the reaction ethanolamine = acetaldehyde + NH4(+). Its pathway is amine and polyamine degradation; ethanolamine degradation. Functionally, catalyzes the deamination of various vicinal amino-alcohols to oxo compounds. Allows this organism to utilize ethanolamine as the sole source of nitrogen and carbon in the presence of external vitamin B12. The polypeptide is Ethanolamine ammonia-lyase small subunit (Escherichia fergusonii (strain ATCC 35469 / DSM 13698 / CCUG 18766 / IAM 14443 / JCM 21226 / LMG 7866 / NBRC 102419 / NCTC 12128 / CDC 0568-73)).